Reading from the N-terminus, the 513-residue chain is ATP synthase subunit alpha (513 aa).

169 to 176 (GDRQTGKT) is an ATP binding site.

It belongs to the ATPase alpha/beta chains family. As to quaternary structure, F-type ATPases have 2 components, CF(1) - the catalytic core - and CF(0) - the membrane proton channel. CF(1) has five subunits: alpha(3), beta(3), gamma(1), delta(1), epsilon(1). CF(0) has three main subunits: a(1), b(2) and c(9-12). The alpha and beta chains form an alternating ring which encloses part of the gamma chain. CF(1) is attached to CF(0) by a central stalk formed by the gamma and epsilon chains, while a peripheral stalk is formed by the delta and b chains.

The protein localises to the cell inner membrane. It catalyses the reaction ATP + H2O + 4 H(+)(in) = ADP + phosphate + 5 H(+)(out). Its function is as follows. Produces ATP from ADP in the presence of a proton gradient across the membrane. The alpha chain is a regulatory subunit. The chain is ATP synthase subunit alpha from Shewanella sp. (strain ANA-3).